We begin with the raw amino-acid sequence, 436 residues long: 3-ketoacyl-CoA thiolase (436 aa).

C99 (acyl-thioester intermediate) is an active-site residue. Catalysis depends on proton acceptor residues H392 and C422.

It belongs to the thiolase-like superfamily. Thiolase family. Heterotetramer of two alpha chains (FadJ) and two beta chains (FadI).

The protein localises to the cytoplasm. It carries out the reaction an acyl-CoA + acetyl-CoA = a 3-oxoacyl-CoA + CoA. The protein operates within lipid metabolism; fatty acid beta-oxidation. Its function is as follows. Catalyzes the final step of fatty acid oxidation in which acetyl-CoA is released and the CoA ester of a fatty acid two carbons shorter is formed. The protein is 3-ketoacyl-CoA thiolase of Shewanella amazonensis (strain ATCC BAA-1098 / SB2B).